The primary structure comprises 382 residues: S-adenosylmethionine synthase (382 aa).

H15 contributes to the ATP binding site. Residue D17 participates in Mg(2+) binding. E43 is a binding site for K(+). The L-methionine site is built by E56 and Q99. The flexible loop stretch occupies residues 99 to 109; that stretch reads QSGDIAQGVDR. ATP contacts are provided by residues 164–166, 230–231, D239, 245–246, A262, and K266; these read DAK, KF, and RK. Residue D239 coordinates L-methionine. K270 is an L-methionine binding site.

It belongs to the AdoMet synthase family. Homotetramer; dimer of dimers. The cofactor is Mg(2+). It depends on K(+) as a cofactor.

It localises to the cytoplasm. The enzyme catalyses L-methionine + ATP + H2O = S-adenosyl-L-methionine + phosphate + diphosphate. It participates in amino-acid biosynthesis; S-adenosyl-L-methionine biosynthesis; S-adenosyl-L-methionine from L-methionine: step 1/1. In terms of biological role, catalyzes the formation of S-adenosylmethionine (AdoMet) from methionine and ATP. The overall synthetic reaction is composed of two sequential steps, AdoMet formation and the subsequent tripolyphosphate hydrolysis which occurs prior to release of AdoMet from the enzyme. This chain is S-adenosylmethionine synthase, found in Dichelobacter nodosus (strain VCS1703A).